A 369-amino-acid polypeptide reads, in one-letter code: Bi-functional coumaroyl CoA and feruloyl CoA ortho-hydroxylase Diox2 (369 aa).

The Fe2OG dioxygenase domain maps to 215 to 318; sequence GSRRVNLNYY…RISVPLFVNP (104 aa). Residue tyrosine 224 participates in 2-oxoglutarate binding. Fe cation is bound by residues histidine 239, aspartate 241, and histidine 299. Arginine 309 and serine 311 together coordinate 2-oxoglutarate.

Belongs to the iron/ascorbate-dependent oxidoreductase family. The cofactor is L-ascorbate. Fe(2+) serves as cofactor.

The catalysed reaction is (E)-4-coumaroyl-CoA + 2-oxoglutarate + O2 = (E)-2,4-dihydroxycinnamoyl-CoA + succinate + CO2. It carries out the reaction (E)-feruloyl-CoA + 2-oxoglutarate + O2 = (E)-6-hydroxyferuloyl-CoA + succinate + CO2. It participates in phenylpropanoid metabolism. Its function is as follows. 2-oxoglutarate (OG)- and Fe(II)-dependent dioxygenase (2OGD) involved in scopoletin and umbelliferone biosynthesis. Converts feruloyl CoA into 6'-hydroxyferuloyl CoA, and p-coumaroyl CoA into 2,4-dihydroxycinnamoyl-CoA. The polypeptide is Bi-functional coumaroyl CoA and feruloyl CoA ortho-hydroxylase Diox2 (Ruta graveolens (Common rue)).